Reading from the N-terminus, the 230-residue chain is Uracil-DNA glycosylase (230 aa).

Asp70 (proton acceptor) is an active-site residue.

This sequence belongs to the uracil-DNA glycosylase (UDG) superfamily. UNG family.

The protein resides in the cytoplasm. It carries out the reaction Hydrolyzes single-stranded DNA or mismatched double-stranded DNA and polynucleotides, releasing free uracil.. Functionally, excises uracil residues from the DNA which can arise as a result of misincorporation of dUMP residues by DNA polymerase or due to deamination of cytosine. In Pseudomonas syringae pv. tomato (strain ATCC BAA-871 / DC3000), this protein is Uracil-DNA glycosylase.